A 344-amino-acid polypeptide reads, in one-letter code: Holliday junction branch migration complex subunit RuvB (344 aa).

Positions 1 to 181 (MERIVTPAEM…FGVLCAMEYY (181 aa)) are large ATPase domain (RuvB-L). ATP-binding positions include Leu-20, Arg-21, Gly-62, Lys-65, Thr-66, Thr-67, 128-130 (EDY), Arg-171, Tyr-181, and Arg-218. Thr-66 is a binding site for Mg(2+). The small ATPAse domain (RuvB-S) stretch occupies residues 182–252 (DETQLKEIVI…EARDALELLE (71 aa)). The head domain (RuvB-H) stretch occupies residues 255-344 (NQGFDKVDNK…SNKGQTSFFK (90 aa)). DNA-binding residues include Arg-310 and Arg-315.

It belongs to the RuvB family. In terms of assembly, homohexamer. Forms an RuvA(8)-RuvB(12)-Holliday junction (HJ) complex. HJ DNA is sandwiched between 2 RuvA tetramers; dsDNA enters through RuvA and exits via RuvB. An RuvB hexamer assembles on each DNA strand where it exits the tetramer. Each RuvB hexamer is contacted by two RuvA subunits (via domain III) on 2 adjacent RuvB subunits; this complex drives branch migration. In the full resolvosome a probable DNA-RuvA(4)-RuvB(12)-RuvC(2) complex forms which resolves the HJ.

The protein localises to the cytoplasm. The enzyme catalyses ATP + H2O = ADP + phosphate + H(+). Functionally, the RuvA-RuvB-RuvC complex processes Holliday junction (HJ) DNA during genetic recombination and DNA repair, while the RuvA-RuvB complex plays an important role in the rescue of blocked DNA replication forks via replication fork reversal (RFR). RuvA specifically binds to HJ cruciform DNA, conferring on it an open structure. The RuvB hexamer acts as an ATP-dependent pump, pulling dsDNA into and through the RuvAB complex. RuvB forms 2 homohexamers on either side of HJ DNA bound by 1 or 2 RuvA tetramers; 4 subunits per hexamer contact DNA at a time. Coordinated motions by a converter formed by DNA-disengaged RuvB subunits stimulates ATP hydrolysis and nucleotide exchange. Immobilization of the converter enables RuvB to convert the ATP-contained energy into a lever motion, pulling 2 nucleotides of DNA out of the RuvA tetramer per ATP hydrolyzed, thus driving DNA branch migration. The RuvB motors rotate together with the DNA substrate, which together with the progressing nucleotide cycle form the mechanistic basis for DNA recombination by continuous HJ branch migration. Branch migration allows RuvC to scan DNA until it finds its consensus sequence, where it cleaves and resolves cruciform DNA. The protein is Holliday junction branch migration complex subunit RuvB of Clostridium botulinum (strain Eklund 17B / Type B).